A 286-amino-acid chain; its full sequence is Undecaprenyl-diphosphatase (286 aa).

The next 7 helical transmembrane spans lie at 50-70 (PGVS…IAYF), 97-117 (LGIA…AIKL), 127-147 (LRSV…LALA), 165-185 (GLLV…RSGS), 200-220 (AARF…LVEL), 230-250 (GGVL…WLAI), and 262-282 (TWVF…WWAG).

This sequence belongs to the UppP family.

It is found in the cell inner membrane. The enzyme catalyses di-trans,octa-cis-undecaprenyl diphosphate + H2O = di-trans,octa-cis-undecaprenyl phosphate + phosphate + H(+). Catalyzes the dephosphorylation of undecaprenyl diphosphate (UPP). Confers resistance to bacitracin. The sequence is that of Undecaprenyl-diphosphatase from Synechococcus sp. (strain WH7803).